The sequence spans 344 residues: MTDTSRNRKVRGSKIRSSRSDKRQSRGSEDKELKRLADARDTDSEQAGDRVGDAFIPDEQSFIETDAVARVTDRMRRWLSVDRPVHLIGPTGCGKTAVAMHVARTRDRPVVWVNGDADLTTSDLVGEYAETERISEHDQFIHNVVKRKDIVRDRWVDNPLTLAVQEGATLVYNEFSRTKPVANNVLLSVFEEGVLELPGKRGASRYVDVHPAFRTILTSNSVEYAGVHEPQDALLDRLVGLHMDFYDAETETAIVRAHVEAADVPVAAIVGMMRELRERLEITVGTRAAIMAAEGLTAADDPDADTVVDVCTDVLASKVSQRSDVEALRDVIEETLADRGVTLS.

The interval 1–55 (MTDTSRNRKVRGSKIRSSRSDKRQSRGSEDKELKRLADARDTDSEQAGDRVGDAF) is disordered. Basic residues predominate over residues 7-17 (NRKVRGSKIRS). Positions 18 to 52 (SRSDKRQSRGSEDKELKRLADARDTDSEQAGDRVG) are enriched in basic and acidic residues. 89 to 96 (GPTGCGKT) serves as a coordination point for ATP.

The protein belongs to the CbbQ/NirQ/NorQ/GpvN family. Forms homodimers, a GvpN-GvpO heterodimer, interacts with GvpC and GvpL, might interact with GvpA.

The protein resides in the gas vesicle. It is found in the cytoplasm. The enzyme catalyses ATP + H2O = ADP + phosphate + H(+). An ATPase that functions in gas vesicle formation. A minor component of the gas vesicle, also found in soluble extracts. Gas vesicles are hollow, gas filled proteinaceous nanostructures found in several microbial planktonic microorganisms. They allow positioning of halobacteria at the optimal depth for growth in the poorly aerated, shallow brine pools of their habitat. Its function is as follows. Expression of 2 c-vac DNA fragments containing 2 divergently transcribed regions (gvpE-gvpF-gvpG-gvpH-gvpI-gvpJ-gvpK-gvpL-gvpM and gvpA-gvpC-gvpN-gvpO) allows H.volcanii to produce gas vesicles. The sequence is that of Gas vesicle ATPase GvpN2 from Halobacterium salinarum (strain ATCC 700922 / JCM 11081 / NRC-1) (Halobacterium halobium).